We begin with the raw amino-acid sequence, 145 residues long: Putative antiporter subunit mnhG2 (145 aa).

3 helical membrane-spanning segments follow: residues 11 to 31 (IAAV…IGIV), 51 to 71 (VLLT…FFSV), and 72 to 92 (RLLL…HLVA).

It belongs to the CPA3 antiporters (TC 2.A.63) subunit G family. As to quaternary structure, may form a heterooligomeric complex that consists of seven subunits: mnhA2, mnhB2, mnhC2, mnhD2, mnhE2, mnhF2 and mnhG2.

The protein localises to the cell membrane. This Staphylococcus aureus (strain COL) protein is Putative antiporter subunit mnhG2 (mnhG2).